A 78-amino-acid polypeptide reads, in one-letter code: 4-methyl-3-hydroxyanthranilic acid carrier protein (78 aa).

Ser33 carries the O-(pantetheine 4'-phosphoryl)serine modification.

This sequence belongs to the acyl carrier protein (ACP) family. Post-translationally, 4'-phosphopantetheine is transferred from CoA to a specific serine of the apo-form of this carrier protein.

The protein operates within antibiotic biosynthesis. In terms of biological role, involved in the biosynthesis of actinomycin. Acts as a carrier in the transfer and thioesterification of 4-methyl-3-hydroxyanthranilic acid (4-MHA). The chain is 4-methyl-3-hydroxyanthranilic acid carrier protein from Streptomyces anulatus (Streptomyces chrysomallus).